The sequence spans 229 residues: Elongation factor 1-delta 1 (229 aa).

The segment at 80–109 (ESTAVPSASTPDVADAKAPAADDDDDDDVD) is disordered. The span at 100 to 109 (ADDDDDDDVD) shows a compositional bias: acidic residues.

Belongs to the EF-1-beta/EF-1-delta family. In terms of assembly, EF-1 is composed of 4 subunits: alpha, beta (1B-alpha=beta'), delta (1B-beta), and gamma (1B-gamma).

In terms of biological role, EF-1-beta and EF-1-beta' stimulate the exchange of GDP bound to EF-1-alpha to GTP. This is Elongation factor 1-delta 1 from Oryza sativa subsp. japonica (Rice).